The primary structure comprises 231 residues: Deoxyribose-phosphate aldolase (231 aa).

Asp-86 acts as the Proton donor/acceptor in catalysis. Lys-147 functions as the Schiff-base intermediate with acetaldehyde in the catalytic mechanism. Lys-172 acts as the Proton donor/acceptor in catalysis. Positions 206–231 (WQAETAGETVTEPESDRDGADTTDGY) are disordered.

It belongs to the DeoC/FbaB aldolase family. DeoC type 1 subfamily.

The protein localises to the cytoplasm. It catalyses the reaction 2-deoxy-D-ribose 5-phosphate = D-glyceraldehyde 3-phosphate + acetaldehyde. It participates in carbohydrate degradation; 2-deoxy-D-ribose 1-phosphate degradation; D-glyceraldehyde 3-phosphate and acetaldehyde from 2-deoxy-alpha-D-ribose 1-phosphate: step 2/2. Catalyzes a reversible aldol reaction between acetaldehyde and D-glyceraldehyde 3-phosphate to generate 2-deoxy-D-ribose 5-phosphate. The polypeptide is Deoxyribose-phosphate aldolase (Haloarcula marismortui (strain ATCC 43049 / DSM 3752 / JCM 8966 / VKM B-1809) (Halobacterium marismortui)).